The chain runs to 2273 residues: Acetyl-CoA carboxylase, mitochondrial (2273 aa).

A mitochondrion-targeting transit peptide spans 1-104; that stretch reads KGKTITHGQS…RGNIHKHTRL (104 aa). Residues 134–635 enclose the Biotin carboxylation domain; the sequence is VISKILIANN…STGWLDDLIL (502 aa). Positions 292–484 constitute an ATP-grasp domain; sequence KTNFVSVPDD…LPATQLQIAM (193 aa). 332-337 provides a ligand contact to ATP; that stretch reads GGGGKG. Residue Arg459 is part of the active site. Residues 763 to 837 enclose the Biotinyl-binding domain; the sequence is LEAELNPTQV…EAGDVIAKLT (75 aa). Lys804 carries the post-translational modification N6-biotinyllysine. The CoA carboxyltransferase N-terminal domain occupies 1532-1867; that stretch reads PYSVKDWLQP…KRDMSPPLLE (336 aa). A carboxyltransferase region spans residues 1532 to 2187; sequence PYSVKDWLQP…EGQVIKRLQK (656 aa). Residues Arg1776, Lys2080, and Arg2082 each contribute to the CoA site. One can recognise a CoA carboxyltransferase C-terminal domain in the interval 1871-2187; the sequence is RWDRDVDFKP…EGQVIKRLQK (317 aa).

The cofactor is biotin.

Its subcellular location is the mitochondrion. It catalyses the reaction hydrogencarbonate + acetyl-CoA + ATP = malonyl-CoA + ADP + phosphate + H(+). The enzyme catalyses N(6)-biotinyl-L-lysyl-[protein] + hydrogencarbonate + ATP = N(6)-carboxybiotinyl-L-lysyl-[protein] + ADP + phosphate + H(+). It functions in the pathway lipid metabolism; malonyl-CoA biosynthesis; malonyl-CoA from acetyl-CoA: step 1/1. Its function is as follows. Catalyzes the rate-limiting reaction in the mitochondrial fatty acid synthesis (FAS) type II pathway. Responsible for the production of the mitochondrial malonyl-CoA, used for the biosynthesis of the cofactor lipoic acid. This protein carries three functions: biotin carboxyl carrier protein, biotin carboxylase, and carboxyltransferase. In Saccharomyces cerevisiae (strain ATCC 204508 / S288c) (Baker's yeast), this protein is Acetyl-CoA carboxylase, mitochondrial (HFA1).